Reading from the N-terminus, the 212-residue chain is Imidazole glycerol phosphate synthase subunit HisH (212 aa).

In terms of domain architecture, Glutamine amidotransferase type-1 spans 1 to 211 (MIGVIDYGMG…KQFTQEQKVK (211 aa)). Residue Cys-79 is the Nucleophile of the active site. Catalysis depends on residues His-186 and Glu-188.

As to quaternary structure, heterodimer of HisH and HisF.

It localises to the cytoplasm. It carries out the reaction 5-[(5-phospho-1-deoxy-D-ribulos-1-ylimino)methylamino]-1-(5-phospho-beta-D-ribosyl)imidazole-4-carboxamide + L-glutamine = D-erythro-1-(imidazol-4-yl)glycerol 3-phosphate + 5-amino-1-(5-phospho-beta-D-ribosyl)imidazole-4-carboxamide + L-glutamate + H(+). The enzyme catalyses L-glutamine + H2O = L-glutamate + NH4(+). Its pathway is amino-acid biosynthesis; L-histidine biosynthesis; L-histidine from 5-phospho-alpha-D-ribose 1-diphosphate: step 5/9. In terms of biological role, IGPS catalyzes the conversion of PRFAR and glutamine to IGP, AICAR and glutamate. The HisH subunit catalyzes the hydrolysis of glutamine to glutamate and ammonia as part of the synthesis of IGP and AICAR. The resulting ammonia molecule is channeled to the active site of HisF. The protein is Imidazole glycerol phosphate synthase subunit HisH of Bacillus licheniformis (strain ATCC 14580 / DSM 13 / JCM 2505 / CCUG 7422 / NBRC 12200 / NCIMB 9375 / NCTC 10341 / NRRL NRS-1264 / Gibson 46).